We begin with the raw amino-acid sequence, 651 residues long: Probable potassium transport system protein Kup (651 aa).

The next 12 membrane-spanning stretches (helical) occupy residues 41-61, 82-102, 130-150, 163-183, 194-214, 235-255, 276-296, 309-329, 366-386, 395-415, 426-446, and 450-470; these read LVLG…IYAF, VVSF…VLFV, LILG…VITP, IVAP…LVTL, VAIV…ASGL, FLTV…LAMT, WLWI…AFIL, MIPS…TVIA, IYIP…VLGF, AYGI…YIVM, ALPI…ANII, and EGGW…WTWV.

Belongs to the HAK/KUP transporter (TC 2.A.72) family.

It localises to the cell inner membrane. The enzyme catalyses K(+)(in) + H(+)(in) = K(+)(out) + H(+)(out). Transport of potassium into the cell. Likely operates as a K(+):H(+) symporter. The protein is Probable potassium transport system protein Kup of Brucella ovis (strain ATCC 25840 / 63/290 / NCTC 10512).